The following is a 309-amino-acid chain: uncharacterized protein (309 aa).

Disordered regions lie at residues 1 to 94 (IGEV…RQQI) and 286 to 309 (HTRN…PPRG). Residues 30–43 (PAQPPSPAPTPSRT) show a composition bias toward pro residues. A compositionally biased stretch (basic and acidic residues) spans 58-67 (RSKTPDKRSA). Residues 297–309 (KNTPPPLEDPPRG) show a composition bias toward pro residues.

This is an uncharacterized protein from Homo sapiens (Human).